The chain runs to 181 residues: uncharacterized protein (181 aa).

Residues 151-181 (AQKKKDFQEPENKHEQLTSTKAPCQENWSDF) are disordered. Over residues 154-166 (KKDFQEPENKHEQ) the composition is skewed to basic and acidic residues. A compositionally biased stretch (polar residues) spans 167–181 (LTSTKAPCQENWSDF).

This is an uncharacterized protein from Caenorhabditis elegans.